The following is a 2378-amino-acid chain: Serine/threonine-protein kinase ATM (2378 aa).

In terms of domain architecture, FAT spans 1415 to 1937 (LSARKRNTMM…LHTILMYDDE (523 aa)). One can recognise a PI3K/PI4K catalytic domain in the interval 2044–2366 (WKDVFTIADG…LLREATSADN (323 aa)). The G-loop stretch occupies residues 2050–2056 (IADGIST). A catalytic loop region spans residues 2218 to 2226 (GLGDRHASN). The tract at residues 2238–2263 (HIDLGMILEYSKRTLPVPEQVPFRIT) is activation loop. Residues 2346–2378 (TAQSSNLQIRRLLREATSADNLSRMFCGWMPFL) enclose the FATC domain.

It belongs to the PI3/PI4-kinase family. ATM subfamily.

The protein localises to the nucleus. The catalysed reaction is L-seryl-[protein] + ATP = O-phospho-L-seryl-[protein] + ADP + H(+). It catalyses the reaction L-threonyl-[protein] + ATP = O-phospho-L-threonyl-[protein] + ADP + H(+). Its function is as follows. Serine/threonine protein kinase which activates checkpoint signaling in the presence of DNA double strand breaks (DSBs) and other forms of DNA damage induced by ionizing radiation and other genotoxic stresses such as UV. Plays a role in maintaining genome stability. This Caenorhabditis elegans protein is Serine/threonine-protein kinase ATM (atm-1).